Here is a 217-residue protein sequence, read N- to C-terminus: Peptide deformylase 1 (217 aa).

Cys129 and His171 together coordinate Fe cation. Glu172 is a catalytic residue. Residue His175 participates in Fe cation binding.

It belongs to the polypeptide deformylase family. The cofactor is Fe(2+).

It carries out the reaction N-terminal N-formyl-L-methionyl-[peptide] + H2O = N-terminal L-methionyl-[peptide] + formate. Functionally, removes the formyl group from the N-terminal Met of newly synthesized proteins. Requires at least a dipeptide for an efficient rate of reaction. N-terminal L-methionine is a prerequisite for activity but the enzyme has broad specificity at other positions. The protein is Peptide deformylase 1 of Bifidobacterium longum (strain NCC 2705).